A 379-amino-acid polypeptide reads, in one-letter code: Zinc metalloproteinase nas-20 (379 aa).

An N-terminal signal peptide occupies residues 1–20 (MKITVNFLLVALIGVPSVLS). A propeptide spanning residues 21-29 (DRHITRDKR) is cleaved from the precursor. The region spanning 30 to 208 (QAMRDYAKWE…VLLNKFYGCN (179 aa)) is the Peptidase M12A domain. The N-linked (GlcNAc...) asparagine glycan is linked to Asn-67. 4 cysteine pairs are disulfide-bonded: Cys-70-Cys-207, Cys-91-Cys-111, Cys-209-Cys-229, and Cys-234-Cys-243. His-119 is a binding site for Zn(2+). Glu-120 is an active-site residue. Residues His-123 and His-129 each contribute to the Zn(2+) site. Asn-185 is a glycosylation site (N-linked (GlcNAc...) asparagine). Positions 203-244 (KFYGCNCDNHPRKLDCKNGGYQNPANCEECLCTDGFNGQLCD) constitute an EGF-like domain. Asn-337 and Asn-370 each carry an N-linked (GlcNAc...) asparagine glycan.

Requires Zn(2+) as cofactor.

The protein localises to the secreted. Functionally, metalloprotease. The protein is Zinc metalloproteinase nas-20 (nas-20) of Caenorhabditis elegans.